The sequence spans 77 residues: Large ribosomal subunit protein bL28 (77 aa).

This sequence belongs to the bacterial ribosomal protein bL28 family.

In Ralstonia nicotianae (strain ATCC BAA-1114 / GMI1000) (Ralstonia solanacearum), this protein is Large ribosomal subunit protein bL28.